The following is a 692-amino-acid chain: Penicillin-binding protein activator LpoA (692 aa).

The first 26 residues, 1-26, serve as a signal peptide directing secretion; the sequence is MLSSITVRTKSGRLIPLVLAATLLAA. Cys27 carries the N-palmitoyl cysteine lipid modification. Residue Cys27 is the site of S-diacylglycerol cysteine attachment. Disordered stretches follow at residues 297-316 and 324-373; these read AAAA…AAAT and VNAA…PDAH. A compositionally biased stretch (low complexity) spans 332–363; sequence PSAQGTDAAAPAAPNDSAALPPLDAAGDPIAP.

Belongs to the LpoA family. As to quaternary structure, interacts with PBP1a.

The protein localises to the cell outer membrane. Regulator of peptidoglycan synthesis that is essential for the function of penicillin-binding protein 1A (PBP1a). This chain is Penicillin-binding protein activator LpoA, found in Edwardsiella piscicida.